Reading from the N-terminus, the 311-residue chain is HPr kinase/phosphorylase (311 aa).

Residues His138 and Lys159 contribute to the active site. 153–160 (GKSGVGKS) contacts ATP. Position 160 (Ser160) interacts with Mg(2+). Catalysis depends on Asp177, which acts as the Proton acceptor; for phosphorylation activity. Proton donor; for dephosphorylation activity. The tract at residues 201–210 (LEIRGLGIIN) is important for the catalytic mechanism of both phosphorylation and dephosphorylation. Position 202 (Glu202) interacts with Mg(2+). Residue Arg243 is part of the active site. The segment at 264 to 269 (PVRPGR) is important for the catalytic mechanism of dephosphorylation.

This sequence belongs to the HPrK/P family. As to quaternary structure, homohexamer. Mg(2+) is required as a cofactor.

The catalysed reaction is [HPr protein]-L-serine + ATP = [HPr protein]-O-phospho-L-serine + ADP + H(+). It carries out the reaction [HPr protein]-O-phospho-L-serine + phosphate + H(+) = [HPr protein]-L-serine + diphosphate. In terms of biological role, catalyzes the ATP- as well as the pyrophosphate-dependent phosphorylation of a specific serine residue in HPr, a phosphocarrier protein of the phosphoenolpyruvate-dependent sugar phosphotransferase system (PTS). HprK/P also catalyzes the pyrophosphate-producing, inorganic phosphate-dependent dephosphorylation (phosphorolysis) of seryl-phosphorylated HPr (P-Ser-HPr). The two antagonistic activities of HprK/P are regulated by several intracellular metabolites, which change their concentration in response to the absence or presence of rapidly metabolisable carbon sources (glucose, fructose, etc.) in the growth medium. Also phosphorylates/dephosphorylates the HPr-like catabolite repression protein crh on a specific serine residue. Therefore, by controlling the phosphorylation state of HPr and crh, HPrK/P is a sensor enzyme that plays a major role in the regulation of carbon metabolism and sugar transport: it mediates carbon catabolite repression (CCR), and regulates PTS-catalyzed carbohydrate uptake and inducer exclusion. The protein is HPr kinase/phosphorylase of Geobacillus kaustophilus (strain HTA426).